The following is a 232-amino-acid chain: Flagellar L-ring protein (232 aa).

Positions Met-1 to Gly-15 are cleaved as a signal peptide. The N-palmitoyl cysteine moiety is linked to residue Cys-16. Residue Cys-16 is the site of S-diacylglycerol cysteine attachment.

Belongs to the FlgH family. In terms of assembly, the basal body constitutes a major portion of the flagellar organelle and consists of four rings (L,P,S, and M) mounted on a central rod.

The protein resides in the cell outer membrane. Its subcellular location is the bacterial flagellum basal body. In terms of biological role, assembles around the rod to form the L-ring and probably protects the motor/basal body from shearing forces during rotation. This chain is Flagellar L-ring protein, found in Campylobacter jejuni subsp. doylei (strain ATCC BAA-1458 / RM4099 / 269.97).